Consider the following 1114-residue polypeptide: Translation initiation factor IF-2 (1114 aa).

Disordered stretches follow at residues 69-102 and 181-507; these read SIKK…PLLI and INNN…KRRA. Basic and acidic residues predominate over residues 85 to 96; sequence SKKETPLKDNSN. The span at 181–198 shows a compositional bias: polar residues; sequence INNNVKSNESSQNISSAG. The segment covering 240–251 has biased composition (low complexity); the sequence is INPNKQNNKQNI. A compositionally biased stretch (polar residues) spans 252-261; the sequence is AFKQTGSNRI. Low complexity-rich tracts occupy residues 262-278, 290-309, and 321-337; these read GSPN…GLRN, NRQG…GLRN, and NRQG…NRPG. The span at 365 to 375 shows a compositional bias: basic and acidic residues; the sequence is NSEKDNKDKNN. The segment covering 376-385 has biased composition (low complexity); sequence NAKQNINGPN. The segment covering 417 to 431 has biased composition (basic and acidic residues); it reads GKTDWDDSAKLEALR. Residues 489-505 show a composition bias toward basic residues; it reads KQFKKKKKETTRQRQKR. The tr-type G domain maps to 606–778; the sequence is RRPPVITVMG…ILLVSEVEDL (173 aa). The G1 stretch occupies residues 615 to 622; the sequence is GHVDHGKT. A GTP-binding site is contributed by 615 to 622; the sequence is GHVDHGKT. The segment at 640–644 is G2; sequence GITQH. The G3 stretch occupies residues 665–668; that stretch reads DTPG. GTP is bound by residues 665–669 and 719–722; these read DTPGH and NKID. The G4 stretch occupies residues 719–722; sequence NKID. A G5 region spans residues 755–757; it reads SAI.

This sequence belongs to the TRAFAC class translation factor GTPase superfamily. Classic translation factor GTPase family. IF-2 subfamily.

The protein localises to the cytoplasm. In terms of biological role, one of the essential components for the initiation of protein synthesis. Protects formylmethionyl-tRNA from spontaneous hydrolysis and promotes its binding to the 30S ribosomal subunits. Also involved in the hydrolysis of GTP during the formation of the 70S ribosomal complex. In Prochlorococcus marinus (strain MIT 9301), this protein is Translation initiation factor IF-2.